Reading from the N-terminus, the 215-residue chain is Calmodulin-like protein 5 (215 aa).

The segment at 38–61 is disordered; it reads KNSPPSPSTMLPSPSSSSAPTKRI. Residues 45-57 are compositionally biased toward low complexity; the sequence is STMLPSPSSSSAP. EF-hand domains follow at residues 61–96, 97–132, 139–174, and 177–212; these read IDPS…LGIY, IPDK…IVDE, TEEE…LGLK, and KTLD…GGFS. 19 residues coordinate Ca(2+): Asp74, Asn76, Asp78, Arg80, Glu85, Asp110, Asn112, Asp114, Cys116, Glu121, Asp152, Asp154, Asp156, Glu163, Asp190, Asp192, Asp194, Arg196, and Glu201.

The protein belongs to the calmodulin family.

Potential calcium sensor. The protein is Calmodulin-like protein 5 (CML5) of Arabidopsis thaliana (Mouse-ear cress).